The primary structure comprises 67 residues: Large ribosomal subunit protein eL24 (67 aa).

Positions 7, 10, 33, and 37 each coordinate Zn(2+). Residues 7-37 (CDYCGTDIEPGTGTMFVHKDGATTHFCSSKC) form a C4-type zinc finger. Residues 48 to 60 (RNLEWTDTARGEA) are compositionally biased toward basic and acidic residues. The interval 48–67 (RNLEWTDTARGEAGEAEDEA) is disordered.

The protein belongs to the eukaryotic ribosomal protein eL24 family. Part of the 50S ribosomal subunit. Forms a cluster with proteins L3 and L14. Requires Zn(2+) as cofactor.

Functionally, binds to the 23S rRNA. The chain is Large ribosomal subunit protein eL24 (rpl24e) from Haloarcula marismortui (strain ATCC 43049 / DSM 3752 / JCM 8966 / VKM B-1809) (Halobacterium marismortui).